The chain runs to 599 residues: Crinkler effector protein 8 (599 aa).

Positions 1–17 (MVTLFCAVVGVAGSTFP) are cleaved as a signal peptide. The interval 18–52 (VDINENKSVGHLKKAIKEEKMYQFPADELQLFLAK) is LQLFLAK domain. N-linked (GlcNAc...) asparagine glycosylation occurs at asparagine 23. The tract at residues 53–109 (AGGNAWLSSLTEDVKKLKKGEKTALVKSLTQEEKELQGEDPISECLEGMDPPKVKQI) is DWL domain. Positions 110–116 (HVLVALP) match the HVLVXXP motif motif. The tract at residues 117 to 590 (PGTSSAPISD…EAAEQESQGK (474 aa)) is C-terminal D2 effector domain. A phosphoserine mark is found at serine 249, serine 281, and serine 385. The Protein kinase domain occupies 289 to 590 (LSKKLVWSYG…EAAEQESQGK (302 aa)). Catalysis depends on aspartate 470, which acts as the Proton acceptor. Residues serine 474 and serine 587 each carry the phosphoserine modification. Positions 577–599 (RFEREAAEQESQGKGVRKKHRRA) are disordered. The short motif at 590–599 (KGVRKKHRRA) is the Host nuclear localization signal element.

It in the N-terminal section; belongs to the Crinkler effector family. The protein in the C-terminal section; belongs to the protein kinase superfamily. As to quaternary structure, dimerizes in host plants. Post-translationally, autophosphorylated at Ser-249, Ser-281, Ser-385, Ser-474 and Ser-587. Additional serines or threonines are also targeted for phosphorylation.

The protein resides in the secreted. The protein localises to the host nucleus. It catalyses the reaction L-seryl-[protein] + ATP = O-phospho-L-seryl-[protein] + ADP + H(+). The enzyme catalyses L-threonyl-[protein] + ATP = O-phospho-L-threonyl-[protein] + ADP + H(+). Functionally, secreted effector that induces cell death when expressed in host plants. Acts as a kinase and is able to autophosphorylate, however its cell death inducing ability is not a direct result of its kinase activity, but rather a consequence of the phosphorylated state of the five identified serine residues in the CRN8 protein. The protein is Crinkler effector protein 8 of Phytophthora infestans (Potato late blight agent).